Here is a 165-residue protein sequence, read N- to C-terminus: Small ribosomal subunit protein uS5 (165 aa).

The 64-residue stretch at 10-73 (LKEKVVFINR…EDAKKHLVEV (64 aa)) folds into the S5 DRBM domain.

It belongs to the universal ribosomal protein uS5 family. Part of the 30S ribosomal subunit. Contacts proteins S4 and S8.

Its function is as follows. With S4 and S12 plays an important role in translational accuracy. Located at the back of the 30S subunit body where it stabilizes the conformation of the head with respect to the body. In Clostridium novyi (strain NT), this protein is Small ribosomal subunit protein uS5.